The primary structure comprises 138 residues: Small ribosomal subunit protein uS11c (138 aa).

Positions 1–22 (MAKPIPKIGSRKNARSGSRKHL) are disordered. Residues 9–22 (GSRKNARSGSRKHL) are compositionally biased toward basic residues.

It belongs to the universal ribosomal protein uS11 family. Part of the 30S ribosomal subunit.

It localises to the plastid. It is found in the chloroplast. The polypeptide is Small ribosomal subunit protein uS11c (Lotus japonicus (Lotus corniculatus var. japonicus)).